Reading from the N-terminus, the 473-residue chain is MGRKKIQITRIMDERNRQVTFTKRKFGLMKKAYELSVLCDCEIALIIFNSTNKLFQYASTDMDKVLLKYTEYNEPHESRTNSDIVETLRKKGLNGCDSPDPDADDSVGHSPESEDKYRKINEDIDLMISRQRLCAVPPPNFEMPVSIPVSSHNSLVYSNPVSSLGNPNLLPLAHPSLQRNSMSPGVTHRPPSAGNTGGLMGGDLTSGAGTSAGNGYGNPRNSPGLLVSPGNLNKNMQAKSPPPMNLGMNNRKPDLRVLIPPGSKNTMPSVSEDVDLLLNQRINNSQSAQSLATPVVSVATPTLPGQGMGGYPSAISTTYGTEYSLSSADLSSLSGFNTASALHLGSVTGWQQQHLHNMPPSALSQLGACTSTHLSQSSNLSLPSTQSLNIKSEPVSPPRDRTTTPSRYPQHTRHEAGRSPVDSLSSCSSSYDGSDREDHRNEFHSPIGLTRPSPDERESPSVKRMRLSEGWAT.

The 55-residue stretch at 3 to 57 (RKKIQITRIMDERNRQVTFTKRKFGLMKKAYELSVLCDCEIALIIFNSTNKLFQY) folds into the MADS-box domain. Lys4 carries the post-translational modification N6-acetyllysine. The mef2-type DNA-binding region spans 58-86 (ASTDMDKVLLKYTEYNEPHESRTNSDIVE). Residue Ser59 is modified to Phosphoserine; by CK2. Positions 91-116 (KGLNGCDSPDPDADDSVGHSPESEDK) are disordered. Phosphoserine occurs at positions 98, 106, and 110. An N6-acetyllysine mark is found at Lys116 and Lys119. Residues 180–224 (NSMSPGVTHRPPSAGNTGGLMGGDLTSGAGTSAGNGYGNPRNSPG) are disordered. 2 positions are modified to phosphoserine: Ser222 and Ser228. N6-acetyllysine occurs at positions 234 and 239. Ser240 bears the Phosphoserine mark. N6-acetyllysine is present on residues Lys252 and Lys264. The beta domain stretch occupies residues 271 to 278 (SEDVDLLL). Residues Thr293 and Thr300 each carry the phosphothreonine; by MAPK14 modification. A transcription repressor region spans residues 368–399 (ACTSTHLSQSSNLSLPSTQSLNIKSEPVSPPR). Positions 375–390 (SQSSNLSLPSTQSLNI) are enriched in polar residues. The tract at residues 375-473 (SQSSNLSLPS…RMRLSEGWAT (99 aa)) is disordered. Lys391 participates in a covalent cross-link: Glycyl lysine isopeptide (Lys-Gly) (interchain with G-Cter in SUMO). The residue at position 396 (Ser396) is a Phosphoserine; by CDK5. Residue Ser419 is modified to Phosphoserine; by MAPK7. The span at 419–432 (SPVDSLSSCSSSYD) shows a compositional bias: low complexity. The span at 433–443 (GSDREDHRNEF) shows a compositional bias: basic and acidic residues. At Ser445 the chain carries Phosphoserine.

Belongs to the MEF2 family. As to quaternary structure, forms a complex with class II HDACs in undifferentiating cells. On myogenic differentiation, HDACs are released into the cytoplasm allowing MEF2s to interact with other proteins for activation. Interacts with EP300 in differentiating cells; the interaction acetylates MEF2C leading to increased DNA binding and activation. Interacts with HDAC7 and CARM1. Interacts with HDAC4 and HDAC9; the interaction with HDACs represses transcriptional activity. Interacts with LPIN1. Interacts with MYOCD. Interacts with AKAP13. Interacts with FOXK1; the interaction inhibits MEF2C transactivation activity. Interacts (via N-terminus) with HABP4; this interaction decreases DNA-binding activity of MEF2C in myocardial cells in response to mechanical stress. Interacts with JPH2; interaction specifically takes place with the Junctophilin-2 N-terminal fragment cleavage product of JPH2. Interacts (via MADS box) with SOX18. Interacts with PHF7; the interaction promotes MEF2C binding to its transcription targets. In terms of processing, phosphorylation on Ser-59 enhances DNA binding activity. Phosphorylation on Ser-396 is required for Lys-391 sumoylation and inhibits transcriptional activity. Post-translationally, acetylated by p300 on several sites in diffentiating myocytes. Acetylation on Lys-4 increases DNA binding and transactivation. Sumoylated on Lys-391 with SUMO2 but not by SUMO1 represses transcriptional activity. In terms of processing, proteolytically cleaved in cerebellar granule neurons, probably by caspase 7, following neurotoxicity. Preferentially cleaves the CDK5-mediated hyperphosphorylated form which leads to neuron apoptosis and transcriptional inactivation. As to expression, expressed in brain and skeletal muscle.

The protein localises to the nucleus. It localises to the cytoplasm. It is found in the sarcoplasm. Its function is as follows. Transcription activator which binds specifically to the MEF2 element present in the regulatory regions of many muscle-specific genes. Controls cardiac morphogenesis and myogenesis, and is also involved in vascular development. Enhances transcriptional activation mediated by SOX18. Plays an essential role in hippocampal-dependent learning and memory by suppressing the number of excitatory synapses and thus regulating basal and evoked synaptic transmission. Crucial for normal neuronal development, distribution, and electrical activity in the neocortex. Necessary for proper development of megakaryocytes and platelets and for bone marrow B-lymphopoiesis. Required for B-cell survival and proliferation in response to BCR stimulation, efficient IgG1 antibody responses to T-cell-dependent antigens and for normal induction of germinal center B-cells. May also be involved in neurogenesis and in the development of cortical architecture. Isoforms that lack the repressor domain are more active than isoform 1. This Homo sapiens (Human) protein is Myocyte-specific enhancer factor 2C.